Consider the following 375-residue polypeptide: tRNA-specific 2-thiouridylase MnmA (375 aa).

Residues 8-15 (GLSGGVDS) and methionine 34 each bind ATP. The interaction with target base in tRNA stretch occupies residues 104 to 106 (NPD). Cysteine 109 (nucleophile) is an active-site residue. Cysteine 109 and cysteine 208 are oxidised to a cystine. Glycine 134 is an ATP binding site. The interaction with tRNA stretch occupies residues 158 to 160 (KDQ). The active-site Cysteine persulfide intermediate is cysteine 208. Positions 321–322 (RY) are interaction with tRNA.

Belongs to the MnmA/TRMU family.

It localises to the cytoplasm. The enzyme catalyses S-sulfanyl-L-cysteinyl-[protein] + uridine(34) in tRNA + AH2 + ATP = 2-thiouridine(34) in tRNA + L-cysteinyl-[protein] + A + AMP + diphosphate + H(+). In terms of biological role, catalyzes the 2-thiolation of uridine at the wobble position (U34) of tRNA, leading to the formation of s(2)U34. The polypeptide is tRNA-specific 2-thiouridylase MnmA (Mycoplasma mycoides subsp. mycoides SC (strain CCUG 32753 / NCTC 10114 / PG1)).